The following is a 492-amino-acid chain: MNRIRIHVLPTNRGRITPVPRSQEPLSCSFTHRPCSQPRLEGQEFCIKHILEDKNAPFKQCSYISTKNGKRCPSAAPKPEKKDGVSFCAEHARRNALALHAQMKKTNPGPVGETLLCQLSSYAKTELGSQTPESSRSEASRILDEDSWSDGEQEPITVDQTWRGDPDSEADSIDRDQEDPLKHAGVYTAEEVALIMREKLIRLQSLDIDQVKRLQHLLKEKKRRYLHNRKVEHEALGSSLLTGPEGLLARERENLKRLKCLRRYRQRYGVKALLHRQLKERRMLATDGAAQQAHTTRSSQRCLAFVDDVRCSNQSLPMTRHCLTHICQDTNRVLFKCCQGSEEVPCNKPVPVSLSEDPCCPLHFQLPPQMYKPEQVLSVPDDLEAGPMDLYLSAAELQPTESLPLEFSDDLDVVGDSMQCPPSPLLFDPSLTLEDHPVKEIAEGPVDILGQMQMAGDGCRSQGPRNSEKAPAPLSQSGIATANGKPEPTSVS.

Lys-78 participates in a covalent cross-link: Glycyl lysine isopeptide (Lys-Gly) (interchain with G-Cter in SUMO2). A disordered region spans residues Glu-126–Lys-182. Thr-131 is modified (phosphothreonine). Basic and acidic residues predominate over residues Ser-135–Asp-144. Ser-147, Ser-149, Ser-168, and Ser-172 each carry phosphoserine. Positions Trp-162 to Lys-182 are enriched in basic and acidic residues. The required for interaction with other NSL complex members stretch occupies residues Asp-308 to Phe-364. The tract at residues Gln-453–Ser-492 is disordered.

Component of the NSL complex at least composed of KAT8/MOF, KANSL1, KANSL2, KANSL3, MCRS1, PHF20, OGT1/OGT, WDR5 and HCFC1. Ubiquitously expressed.

The protein localises to the nucleus. It localises to the mitochondrion. Its function is as follows. Non-catalytic component of the NSL histone acetyltransferase complex, a multiprotein complex that mediates histone H4 acetylation at 'Lys-5'- and 'Lys-8' (H4K5ac and H4K8ac) at transcription start sites and promotes transcription initiation. Required for NSL complex stability and for transcription of intraciliary transport genes in both ciliated and non-ciliated cells by regulating histone H4 acetylation at 'Lys-5'- and 'Lys-12' (H4K5ac and H4K12ac). This is necessary for cilium assembly in ciliated cells and for organization of the microtubule cytoskeleton in non-ciliated cells. Required within the NSL complex to maintain nuclear architecture stability by promoting KAT8-mediated acetylation of lamin LMNA. This chain is KAT8 regulatory NSL complex subunit 2 (KANSL2), found in Capra hircus (Goat).